Consider the following 291-residue polypeptide: Transcription antitermination protein NusB (291 aa).

Belongs to the NusB family.

Involved in transcription antitermination. Required for transcription of ribosomal RNA (rRNA) genes. Binds specifically to the boxA antiterminator sequence of the ribosomal RNA (rrn) operons. The protein is Transcription antitermination protein NusB of Synechococcus sp. (strain JA-2-3B'a(2-13)) (Cyanobacteria bacterium Yellowstone B-Prime).